The chain runs to 86 residues: uncharacterized protein (86 aa).

This is an uncharacterized protein from Acidianus bottle-shaped virus (isolate Italy/Pozzuoli) (ABV).